Consider the following 279-residue polypeptide: Bifunctional protein FolD (279 aa).

Residues 166–168 (GRS) and S191 each bind NADP(+).

The protein belongs to the tetrahydrofolate dehydrogenase/cyclohydrolase family. As to quaternary structure, homodimer.

It carries out the reaction (6R)-5,10-methylene-5,6,7,8-tetrahydrofolate + NADP(+) = (6R)-5,10-methenyltetrahydrofolate + NADPH. The catalysed reaction is (6R)-5,10-methenyltetrahydrofolate + H2O = (6R)-10-formyltetrahydrofolate + H(+). It participates in one-carbon metabolism; tetrahydrofolate interconversion. In terms of biological role, catalyzes the oxidation of 5,10-methylenetetrahydrofolate to 5,10-methenyltetrahydrofolate and then the hydrolysis of 5,10-methenyltetrahydrofolate to 10-formyltetrahydrofolate. The sequence is that of Bifunctional protein FolD from Shouchella clausii (strain KSM-K16) (Alkalihalobacillus clausii).